We begin with the raw amino-acid sequence, 258 residues long: Imidazole glycerol phosphate synthase subunit HisF (258 aa).

Residues aspartate 11 and aspartate 130 contribute to the active site.

Belongs to the HisA/HisF family. Heterodimer of HisH and HisF.

The protein resides in the cytoplasm. The catalysed reaction is 5-[(5-phospho-1-deoxy-D-ribulos-1-ylimino)methylamino]-1-(5-phospho-beta-D-ribosyl)imidazole-4-carboxamide + L-glutamine = D-erythro-1-(imidazol-4-yl)glycerol 3-phosphate + 5-amino-1-(5-phospho-beta-D-ribosyl)imidazole-4-carboxamide + L-glutamate + H(+). Its pathway is amino-acid biosynthesis; L-histidine biosynthesis; L-histidine from 5-phospho-alpha-D-ribose 1-diphosphate: step 5/9. Functionally, IGPS catalyzes the conversion of PRFAR and glutamine to IGP, AICAR and glutamate. The HisF subunit catalyzes the cyclization activity that produces IGP and AICAR from PRFAR using the ammonia provided by the HisH subunit. In Xanthomonas euvesicatoria pv. vesicatoria (strain 85-10) (Xanthomonas campestris pv. vesicatoria), this protein is Imidazole glycerol phosphate synthase subunit HisF.